We begin with the raw amino-acid sequence, 355 residues long: MSNPQSIVVLGGGSWGTAVAHLLATGGHKVHLVLRSQKLADYINMHHENNIYLPGFSIHPAIHAVTGKISFLTKEPAHVLAKATIVILSVPCQSLRPVLQELEPLLTKNCILVNTAKGIEVETLKTVEQMILDEMAHRVSHYAVLSGPSFAEEVMCEKPTAVVLACRNEQLGEHLREIFSTPWFRTYSSTDVTGVELGGATKNVIAIAAGVSDGLGFGINTRVALMTRGLAETTRLGKALGASPLTFSGLSGLGDLFLTCSGELSRNRQVGLRLGKGELLKNITNSMNMIAEGIKTTYAVNTLASKLNVDMPITKAVYNVLEGVISPHEAVQKLLCRQLRNESLDETQPIWTDIP.

The NADPH site is built by S14, W15, R35, and K117. 3 residues coordinate sn-glycerol 3-phosphate: K117, G147, and S149. A151 serves as a coordination point for NADPH. Residues K202, D255, S265, R266, and N267 each contribute to the sn-glycerol 3-phosphate site. K202 acts as the Proton acceptor in catalysis. R266 is a binding site for NADPH. NADPH is bound by residues I290 and E292.

This sequence belongs to the NAD-dependent glycerol-3-phosphate dehydrogenase family.

The protein localises to the cytoplasm. It carries out the reaction sn-glycerol 3-phosphate + NAD(+) = dihydroxyacetone phosphate + NADH + H(+). The enzyme catalyses sn-glycerol 3-phosphate + NADP(+) = dihydroxyacetone phosphate + NADPH + H(+). Its pathway is membrane lipid metabolism; glycerophospholipid metabolism. Functionally, catalyzes the reduction of the glycolytic intermediate dihydroxyacetone phosphate (DHAP) to sn-glycerol 3-phosphate (G3P), the key precursor for phospholipid synthesis. The polypeptide is Glycerol-3-phosphate dehydrogenase [NAD(P)+] (Lawsonia intracellularis (strain PHE/MN1-00)).